Here is a 431-residue protein sequence, read N- to C-terminus: ABSCISIC ACID-INSENSITIVE 5-like protein 7 (431 aa).

The interval 1–29 (MGTHINFNNLGGGGHPGGEGSSNQMKPTG) is disordered. Over residues 10–20 (LGGGGHPGGEG) the composition is skewed to gly residues. Phosphoserine is present on residues Ser39 and Ser61. The residue at position 110 (Ser110) is a Phosphoserine; by CPK32. The segment at 133-153 (DGNMEGSSGGGGESNVPPGRQ) is disordered. Thr155 carries the phosphothreonine modification. Residues 319–331 (SPGTSSAENNSLS) show a composition bias toward polar residues. Residues 319-338 (SPGTSSAENNSLSPVPYVLN) are disordered. The short motif at 340–347 (GRRSNTGL) is the Nuclear localization signal element. In terms of domain architecture, bZIP spans 351–414 (IERRQRRMIK…KNELKETSKR (64 aa)). The tract at residues 353–372 (RRQRRMIKNRESAARSRARK) is basic motif. A coiled-coil region spans residues 372 to 411 (KQAYTLELEAEIEKLKKTNQELQKKQAEMVEMQKNELKET). Residues 379–393 (LEAEIEKLKKTNQEL) are leucine-zipper.

This sequence belongs to the bZIP family. ABI5 subfamily. DNA-binding heterodimer. Interacts with CPK32 and the AFP proteins AFP1, AFP2 and AFP3. Interacts with FREE1 (via C-terminus). Phosphorylated by CPK4 and CPK11 in vitro. Expressed in roots, leaves, flowers and immatures siliques.

The protein localises to the nucleus. Functions as a transcriptional activator in the ABA-inducible expression of LTI65/RD29B (AC Q04980). Binds specifically to the ABA-responsive element (ABRE) of the LTI65/RD29B (AC Q04980) gene promoter. Binds to the promoter of FREE1 and activates its transcription. In Arabidopsis thaliana (Mouse-ear cress), this protein is ABSCISIC ACID-INSENSITIVE 5-like protein 7.